Here is a 504-residue protein sequence, read N- to C-terminus: Sphingosine-1-phosphate transporter SPNS2 (504 aa).

The next 11 helical transmembrane spans lie at 48 to 70 (LLRCRTPLVAAGILSFGNVLNYM), 94 to 114 (GLLQTVFICSFMVAAPIFGYL), 122 to 142 (IILSCGIFFWSAVTLLSSFIT), 182 to 202 (VMLSVFYLAIPLGSGLGYILG), 214 to 234 (WALRVSPMLGLTAGTLILIFV), 269 to 289 (VFSSLASAAVSFATGAFGIWI), 317 to 337 (LIFGAITCVTGLLGVVIGAVT), 351 to 371 (LVCAVSMLGSAIFICLIFVVA), 375 to 395 (IVGAYICIFIGETLLFLNWAI), 415 to 435 (FQGFTSHLLGDAGSPYLIGLI), and 460 to 480 (LCPFVIVLGGMFFLATALFFL).

This sequence belongs to the major facilitator superfamily. Spinster (TC 2.A.1.49) family.

The protein localises to the cell membrane. Its subcellular location is the endosome membrane. It catalyses the reaction sphing-4-enine 1-phosphate(in) = sphing-4-enine 1-phosphate(out). It carries out the reaction sphinganine 1-phosphate(in) = sphinganine 1-phosphate(out). Lipid transporter that specifically mediates export of sphingosine-1-phosphate (sphing-4-enine 1-phosphate, S1P) and sphinganine-1-phosphate, which play critical roles in regulating heart development. Mediates the export of S1P from cells in the extraembryonic yolk syncytial layer (YSL), thereby regulating myocardial precursor migration. This is Sphingosine-1-phosphate transporter SPNS2 from Danio rerio (Zebrafish).